We begin with the raw amino-acid sequence, 291 residues long: MANTNVKEKELAKHTDQSQESISTVVSSNEVKHNKESDSNKKVVYSTQNLDLWYGDTHALQNINLDILENNVTAIIGPSGCGKSTYIKTLNRMVELVPSVKTAGKILYRDQNIFDENYSKEKLRTNVGMVFQQPNPFPKSIYDNITYGPKTHGIKDKKLLDEIVEKSLRGAAIWDELKDRLHTNAYGLSGGQQQRVCIARCLAIEPDVILMDEPTSALDPISTLRVEELVQELKENYSIIMVTHNMQQAARVSDKTAFFLNGYVNEYDDTDKIFSNPSDKQTEDYISGRFG.

The segment covering 1–17 (MANTNVKEKELAKHTDQ) has biased composition (basic and acidic residues). Residues 1-40 (MANTNVKEKELAKHTDQSQESISTVVSSNEVKHNKESDSN) form a disordered region. A compositionally biased stretch (polar residues) spans 18–29 (SQESISTVVSSN). Over residues 30 to 40 (EVKHNKESDSN) the composition is skewed to basic and acidic residues. The ABC transporter domain occupies 45–286 (YSTQNLDLWY…PSDKQTEDYI (242 aa)). 77–84 (GPSGCGKS) is a binding site for ATP.

This sequence belongs to the ABC transporter superfamily. Phosphate importer (TC 3.A.1.7) family. In terms of assembly, the complex is composed of two ATP-binding proteins (PstB), two transmembrane proteins (PstC and PstA) and a solute-binding protein (PstS).

It is found in the cell membrane. It carries out the reaction phosphate(out) + ATP + H2O = ADP + 2 phosphate(in) + H(+). Its function is as follows. Part of the ABC transporter complex PstSACB involved in phosphate import. Responsible for energy coupling to the transport system. The sequence is that of Phosphate import ATP-binding protein PstB from Staphylococcus haemolyticus (strain JCSC1435).